The following is a 511-amino-acid chain: Probable lipid II flippase MurJ (511 aa).

The next 11 helical transmembrane spans lie at 25–45 (DILI…FISF), 85–105 (SSIL…GGFF), 133–153 (IMFP…ILNS), 156–178 (YFSI…SVFF), 245–265 (ISLI…ISWI), 271–291 (LIEF…FTSL), 315–335 (LIVS…VIIV), 356–376 (LYSC…AFYA), 400–420 (FLIF…TSWV), 442–462 (FIFI…LFVV), and 481–501 (LFFG…ILGI).

This sequence belongs to the MurJ/MviN family.

The protein localises to the cell inner membrane. It participates in cell wall biogenesis; peptidoglycan biosynthesis. Its function is as follows. Involved in peptidoglycan biosynthesis. Transports lipid-linked peptidoglycan precursors from the inner to the outer leaflet of the cytoplasmic membrane. The protein is Probable lipid II flippase MurJ of Buchnera aphidicola subsp. Acyrthosiphon pisum (strain APS) (Acyrthosiphon pisum symbiotic bacterium).